A 123-amino-acid polypeptide reads, in one-letter code: MIKKLDRNKARRKRQLRVRKTVHGTPERPRLNVFRSNQNIYAQIIDDTVGRTLVSASTLDPEVRSRLQGSGGNKAAAAIVGEVVAKRALAAGVTKVVFDRAGYLYHGRVAALAEAAREAGLEF.

Belongs to the universal ribosomal protein uL18 family. In terms of assembly, part of the 50S ribosomal subunit; part of the 5S rRNA/L5/L18/L25 subcomplex. Contacts the 5S and 23S rRNAs.

Functionally, this is one of the proteins that bind and probably mediate the attachment of the 5S RNA into the large ribosomal subunit, where it forms part of the central protuberance. The chain is Large ribosomal subunit protein uL18 from Symbiobacterium thermophilum (strain DSM 24528 / JCM 14929 / IAM 14863 / T).